Here is a 154-residue protein sequence, read N- to C-terminus: PTS system glucose-specific EIIA component (154 aa).

The region spanning 26 to 130 (DEVFKERMLG…SIKSPIIFTN (105 aa)) is the PTS EIIA type-1 domain. Zn(2+)-binding residues include H63 and H78. H78 functions as the Tele-phosphohistidine intermediate; for EIIA activity in the catalytic mechanism. H78 bears the Phosphohistidine; by HPr mark.

In terms of assembly, heterodimer with glycerol kinase (glpk). It depends on Zn(2+) as a cofactor.

It localises to the cytoplasm. The phosphoenolpyruvate-dependent sugar phosphotransferase system (sugar PTS), a major carbohydrate active transport system, catalyzes the phosphorylation of incoming sugar substrates concomitantly with their translocation across the cell membrane. The enzyme II complex composed of PtsG and Crr is involved in glucose transport. In Mycoplasma capricolum subsp. capricolum (strain California kid / ATCC 27343 / NCTC 10154), this protein is PTS system glucose-specific EIIA component (crr).